We begin with the raw amino-acid sequence, 284 residues long: RNase adapter protein RapZ (284 aa).

Glycine 8 to serine 15 provides a ligand contact to ATP. GTP is bound at residue aspartate 56–asparagine 59. Positions arginine 266–glutamate 284 are RNA-binding.

This sequence belongs to the RapZ-like family. RapZ subfamily. In terms of assembly, homotrimer.

Functionally, modulates the synthesis of GlmS, by affecting the processing and stability of the regulatory small RNA GlmZ. When glucosamine-6-phosphate (GlcN6P) concentrations are high in the cell, RapZ binds GlmZ and targets it to cleavage by RNase E. Consequently, GlmZ is inactivated and unable to activate GlmS synthesis. Under low GlcN6P concentrations, RapZ is sequestered and inactivated by an other regulatory small RNA, GlmY, preventing GlmZ degradation and leading to synthesis of GlmS. The polypeptide is RNase adapter protein RapZ (Hamiltonella defensa subsp. Acyrthosiphon pisum (strain 5AT)).